We begin with the raw amino-acid sequence, 293 residues long: Ribosomal protein L11 methyltransferase (293 aa).

Residues threonine 145, glycine 166, aspartate 188, and asparagine 230 each coordinate S-adenosyl-L-methionine.

The protein belongs to the methyltransferase superfamily. PrmA family.

Its subcellular location is the cytoplasm. It carries out the reaction L-lysyl-[protein] + 3 S-adenosyl-L-methionine = N(6),N(6),N(6)-trimethyl-L-lysyl-[protein] + 3 S-adenosyl-L-homocysteine + 3 H(+). Methylates ribosomal protein L11. The protein is Ribosomal protein L11 methyltransferase of Salmonella agona (strain SL483).